Reading from the N-terminus, the 61-residue chain is UPF0181 protein MS1074 (61 aa).

It belongs to the UPF0181 family.

This chain is UPF0181 protein MS1074, found in Mannheimia succiniciproducens (strain KCTC 0769BP / MBEL55E).